A 147-amino-acid polypeptide reads, in one-letter code: Lipoprotein YafY (147 aa).

A signal peptide spans 1–20 (MKRKTLPLLALVATTLFLIA). Residue C21 is the site of N-palmitoyl cysteine attachment. The S-diacylglycerol cysteine moiety is linked to residue C21.

This sequence to E.coli YfjS.

It localises to the cell inner membrane. When overproduced strongly induces degP through the activation of the two-component envelope stress response system CpxA/CpxR. This Escherichia coli (strain K12) protein is Lipoprotein YafY (yafY).